Reading from the N-terminus, the 257-residue chain is Probable dihydroorotate dehydrogenase B (NAD(+)), electron transfer subunit (257 aa).

One can recognise an FAD-binding FR-type domain in the interval E2–P89. Residues C208, C213, C216, and C226 each coordinate [2Fe-2S] cluster.

The protein belongs to the PyrK family. Heterotetramer of 2 PyrK and 2 PyrD type B subunits. [2Fe-2S] cluster serves as cofactor. The cofactor is FAD.

Its pathway is pyrimidine metabolism; UMP biosynthesis via de novo pathway; orotate from (S)-dihydroorotate (NAD(+) route): step 1/1. Its function is as follows. Responsible for channeling the electrons from the oxidation of dihydroorotate from the FMN redox center in the PyrD type B subunit to the ultimate electron acceptor NAD(+). The protein is Probable dihydroorotate dehydrogenase B (NAD(+)), electron transfer subunit of Methanocaldococcus jannaschii (strain ATCC 43067 / DSM 2661 / JAL-1 / JCM 10045 / NBRC 100440) (Methanococcus jannaschii).